Consider the following 402-residue polypeptide: LIM/homeobox protein Lhx5 (402 aa).

LIM zinc-binding domains follow at residues 3 to 61 and 62 to 125; these read AHCA…RRFG and TKCA…ASSL. Disordered stretches follow at residues 133–187, 291–335, and 365–392; these read VSSC…RTTI, NYDF…GHHP, and SGEVFTGGPSPPFSMSNNSGFSGPLPHQ. The span at 151 to 167 shows a compositional bias: basic and acidic residues; the sequence is DESKETDHSTSSDKETA. A DNA-binding region (homeobox) is located at residues 180–239; the sequence is RRGPRTTIKAKQLETLKAAFIATPKPTRHIREQLAQETGLNMRVIQVWFQNRRSKERRMK. A compositionally biased stretch (polar residues) spans 300–319; that stretch reads PSSQTQSPADSSYLQNSGPG.

In terms of assembly, interacts with ldb1 and with the N-terminus of rnf12.

Its subcellular location is the nucleus. Probably involved in the patterning of the nervous system, in particular in the early specification of the diencephalon. The sequence is that of LIM/homeobox protein Lhx5 (lhx5) from Xenopus laevis (African clawed frog).